The sequence spans 296 residues: Tubulin polyglutamylase complex subunit 2 (296 aa).

Basic residues predominate over residues 254–265 (SKNKILIPKKKG). The tract at residues 254 to 296 (SKNKILIPKKKGPVPPASGQKGPGPLPPPTSKPTTGSGNPVRK) is disordered. The span at 285–296 (KPTTGSGNPVRK) shows a compositional bias: low complexity.

As to quaternary structure, part of the neuronal tubulin polyglutamylase complex which contains TPGS1, TPGS2, TTLL1, LRRC49 and NICN1. Interacts with CSTPP1 and LRRC49.

The protein localises to the cytoplasm. Its subcellular location is the cytoskeleton. It localises to the microtubule organizing center. It is found in the centrosome. The protein resides in the centriolar satellite. Subunit of the tubulin polyglutamylase complex (TPGC). The complex mediates cilia and flagella polyglutamylation which is essential for their biogenesis and motility. The sequence is that of Tubulin polyglutamylase complex subunit 2 (Tpgs2) from Mus musculus (Mouse).